The following is a 261-amino-acid chain: tRNA pseudouridine synthase A (261 aa).

Asp-51 functions as the Nucleophile in the catalytic mechanism. Position 109 (Tyr-109) interacts with substrate.

The protein belongs to the tRNA pseudouridine synthase TruA family. In terms of assembly, homodimer.

The enzyme catalyses uridine(38/39/40) in tRNA = pseudouridine(38/39/40) in tRNA. Its function is as follows. Formation of pseudouridine at positions 38, 39 and 40 in the anticodon stem and loop of transfer RNAs. This Haemophilus ducreyi (strain 35000HP / ATCC 700724) protein is tRNA pseudouridine synthase A.